The primary structure comprises 1174 residues: Nucleolar complex protein 1 (1174 aa).

Disordered regions lie at residues 1–20 (MPAAVATGVQFGGPPKNKKI), 29–237 (VVKQ…EESQ), 715–742 (YEDVKDEADDTKDSNPLEEKADNDVKSS), 893–922 (AQNKKQKEIKKDAAEEGDDGEAGEEYLKEG), 944–1085 (GVDE…GGRS), and 1116–1174 (VKGQ…KRKH). Over residues 33–63 (NKKEHPQRPKFEGKEQVKKPQKIKFGEDGKA) the composition is skewed to basic and acidic residues. Over residues 95-104 (ASKSFNQNHK) the composition is skewed to polar residues. Basic and acidic residues-rich tracts occupy residues 113–122 (KFGEDREAVH) and 176–200 (KFGDDGESKENFKKPQRIKFDEDGA). 2 stretches are compositionally biased toward acidic residues: residues 207-216 (SDGDSDEELG) and 715-724 (YEDVKDEADD). Basic and acidic residues-rich tracts occupy residues 725–739 (TKDSNPLEEKADNDV) and 897–906 (KQKEIKKDAA). Acidic residues-rich tracts occupy residues 907-916 (EEGDDGEAGE), 945-954 (VDEEQDEEEL), 981-1038 (AEDE…DEGS), and 1048-1065 (DSSDAPESPDEEDDDDED). Positions 1127–1143 (NKDKSSDKQLKWEENRR) are enriched in basic and acidic residues. Positions 1156-1166 (GKPAAKGGRPQ) are enriched in low complexity.

It belongs to the CBF/MAK21 family.

The protein resides in the nucleus. It localises to the nucleolus. Involved in rRNA processing and ribosome maturation. May also act as a transcription factor. The protein is Nucleolar complex protein 1 of Drosophila melanogaster (Fruit fly).